Reading from the N-terminus, the 427-residue chain is 3-phosphoshikimate 1-carboxyvinyltransferase (427 aa).

3-phosphoshikimate-binding residues include Lys22, Ser23, and Arg27. Phosphoenolpyruvate is bound at residue Lys22. Phosphoenolpyruvate contacts are provided by Gly93 and Arg122. Residues Ser167, Gln169, Asp315, and Lys342 each coordinate 3-phosphoshikimate. Gln169 contacts phosphoenolpyruvate. Asp315 (proton acceptor) is an active-site residue. Residues Arg346 and Arg387 each coordinate phosphoenolpyruvate.

Belongs to the EPSP synthase family. In terms of assembly, monomer.

The protein localises to the cytoplasm. The catalysed reaction is 3-phosphoshikimate + phosphoenolpyruvate = 5-O-(1-carboxyvinyl)-3-phosphoshikimate + phosphate. The protein operates within metabolic intermediate biosynthesis; chorismate biosynthesis; chorismate from D-erythrose 4-phosphate and phosphoenolpyruvate: step 6/7. In terms of biological role, catalyzes the transfer of the enolpyruvyl moiety of phosphoenolpyruvate (PEP) to the 5-hydroxyl of shikimate-3-phosphate (S3P) to produce enolpyruvyl shikimate-3-phosphate and inorganic phosphate. The polypeptide is 3-phosphoshikimate 1-carboxyvinyltransferase (Thermus thermophilus (strain ATCC 27634 / DSM 579 / HB8)).